The chain runs to 422 residues: Methylaspartate ammonia-lyase (422 aa).

A (2S,3S)-3-methyl-L-aspartate-binding site is contributed by Gln175. Residues Asp239, Glu276, and Asp310 each coordinate Mg(2+). Gln332 contacts (2S,3S)-3-methyl-L-aspartate. The active-site Proton acceptor is the Lys334. (2S,3S)-3-methyl-L-aspartate is bound at residue 363 to 364 (TC).

Belongs to the methylaspartate ammonia-lyase family. In terms of assembly, homodimer. The cofactor is Mg(2+).

The catalysed reaction is (2S,3S)-3-methyl-L-aspartate = mesaconate + NH4(+). Its pathway is amino-acid degradation; L-glutamate degradation via mesaconate pathway; acetate and pyruvate from L-glutamate: step 2/4. Involved in the methylaspartate cycle. Catalyzes the formation of the alpha,beta-unsaturated bond by the reversible anti elimination of ammonia from L-threo-beta-methylaspartate (L-threo-(2S,3S)-3-methylaspartate) to give mesaconate. This chain is Methylaspartate ammonia-lyase (mal), found in Haloarcula marismortui (strain ATCC 43049 / DSM 3752 / JCM 8966 / VKM B-1809) (Halobacterium marismortui).